A 439-amino-acid polypeptide reads, in one-letter code: MESWSRCLERLETEFPPEDVHTWLRPLQADQRGDSVILYAPNTFIIELVEERYLGRLRELLSYFSGIREVVLAIGSRPKTTELTVPVDTTGRLSQTVPFNGNLDTHYNFDNFVEGRSNQLARAAAWQAAQKPGDRTHNPLLLYGGTGLGKTHLMFAAGNVMRQVNPTYKVMYLRSEQFFSAMIRALQDKSMDQFKRQFHQIDALLIDDIQFFAGKDRTQEEFFHTFNALFDGKQQIILTCDRYPREVNGLEPRLKSRLAWGLSVAIDPPDFETRAAIVLAKARERGATIPDEVAFLIAKKMHSNVRDLEGALNTLVARANFTGRAVTIEFSQETLRDLLRAQQQTIGIPNIQKIVADYYGLQIKDLLSKRRTRSLARPRQLAMALAKELTEHSLPEIGDAFAGRDHTTVLHACRQIKLLMETETKLREDWDKLMRKFSE.

Positions 1–75 are domain I, interacts with DnaA modulators; it reads MESWSRCLER…GIREVVLAIG (75 aa). The domain II stretch occupies residues 75–101; sequence GSRPKTTELTVPVDTTGRLSQTVPFNG. Residues 102-319 form a domain III, AAA+ region region; sequence NLDTHYNFDN…GALNTLVARA (218 aa). The ATP site is built by glycine 147, glycine 149, lysine 150, and threonine 151. A domain IV, binds dsDNA region spans residues 320 to 439; the sequence is NFTGRAVTIE…WDKLMRKFSE (120 aa).

The protein belongs to the DnaA family. In terms of assembly, oligomerizes as a right-handed, spiral filament on DNA at oriC.

It is found in the cytoplasm. Plays an essential role in the initiation and regulation of chromosomal replication. ATP-DnaA binds to the origin of replication (oriC) to initiate formation of the DNA replication initiation complex once per cell cycle. Binds the DnaA box (a 9 base pair repeat at the origin) and separates the double-stranded (ds)DNA. Forms a right-handed helical filament on oriC DNA; dsDNA binds to the exterior of the filament while single-stranded (ss)DNA is stabiized in the filament's interior. The ATP-DnaA-oriC complex binds and stabilizes one strand of the AT-rich DNA unwinding element (DUE), permitting loading of DNA polymerase. After initiation quickly degrades to an ADP-DnaA complex that is not apt for DNA replication. Binds acidic phospholipids. The chain is Chromosomal replication initiator protein DnaA from Xylella fastidiosa (strain Temecula1 / ATCC 700964).